Reading from the N-terminus, the 690-residue chain is MPDVDPTPDLDLEAIDSEPAAAEAAEQLRAALRHHNYRYYVLDAPVVSDAEYDRLFQQLQTLEAEYPVLQTPDSPTHQVGGPVRDELGTVTHPAPMLSLKAVYEEDEVRNFAETCREELGRETVTYIAEPKFDGLAVELIYEDGRLVQGATRGDGETGEEITANVKTIKGVPLRLRDDARPVPDRLVVRGEAYMRKDEFNAFNRRREEEGKKVFANPRNAAAGSLRQLDSNITARRPLRIYFYEIAPVDGRDFATHAEVLEALPEWGLRVCEDHIRRCDGIDAALAHHAALVDRRDDLPYEIDGLVIKVNDFDGHETLGVRDRDPRWAAAYKFPPRRATTSIEDLFVQVGRTGRITPVAVLAPVEVGGVEVTRASLHNQNEIDRKDIRIGDTVLIERAGDVIPQVVKVIEDERDGTEAPYHIPDACPVCGSEVVLSDDKKQAFCTGGMTCPAQFRERLKHYASREATDIEGLGDKRAEQLIDAGLIQTISDLYELEKADLLQLERYADKSAQNLIDEIEASLEQDLDRFLYALGIPLVGSATARLLAQHFDTLDALVDADEDALTTIDDIGPEVAHSIATFFADDANRGVIDEMRDAGLTLTNPYAEDAARLEGLTFVFTGSLEGWTRSAVQRFVEQHGANATSSVSGNTDYVVAGPGAGSKRDDADDRGIPVLDEDAFHALLREQGIDA.

NAD(+) is bound by residues 49–53 (DAEYD), 98–99 (SL), and Glu-129. Residue Lys-131 is the N6-AMP-lysine intermediate of the active site. The NAD(+) site is built by Arg-152, Glu-191, Lys-308, and Lys-332. The Zn(2+) site is built by Cys-426, Cys-429, Cys-444, and Cys-450. The 84-residue stretch at 607-690 (EDAARLEGLT…ALLREQGIDA (84 aa)) folds into the BRCT domain.

The protein belongs to the NAD-dependent DNA ligase family. LigA subfamily. Requires Mg(2+) as cofactor. It depends on Mn(2+) as a cofactor.

The enzyme catalyses NAD(+) + (deoxyribonucleotide)n-3'-hydroxyl + 5'-phospho-(deoxyribonucleotide)m = (deoxyribonucleotide)n+m + AMP + beta-nicotinamide D-nucleotide.. Its function is as follows. DNA ligase that catalyzes the formation of phosphodiester linkages between 5'-phosphoryl and 3'-hydroxyl groups in double-stranded DNA using NAD as a coenzyme and as the energy source for the reaction. It is essential for DNA replication and repair of damaged DNA. This Salinibacter ruber (strain DSM 13855 / M31) protein is DNA ligase.